A 556-amino-acid chain; its full sequence is Riboflavin biosynthesis protein RibBA (556 aa).

Residues 1–202 form a DHBP synthase region; sequence MFDAIDAALA…IADLISYRLQ (202 aa). Residues 26 to 27, Asp31, 141 to 145, and Glu165 each bind D-ribulose 5-phosphate; these read RE and RAGHT. Glu27 contributes to the Mg(2+) binding site. His144 contacts Mg(2+). Positions 203-402 are GTP cyclohydrolase II; the sequence is HDRFVQRETI…AEKLGHWLVK (200 aa). Position 255 to 259 (255 to 259) interacts with GTP; that stretch reads RMHSE. Positions 260, 271, and 273 each coordinate Zn(2+). Residues Gln276, 298–300, and Thr320 contribute to the GTP site; that span reads EGR. Catalysis depends on Asp332, which acts as the Proton acceptor; for GTP cyclohydrolase activity. Arg334 functions as the Nucleophile; for GTP cyclohydrolase activity in the catalytic mechanism. 2 residues coordinate GTP: Thr355 and Lys360. The segment at 403–556 is unknown; sequence NYLLAIAIKF…KQGSGEMTNR (154 aa).

It in the N-terminal section; belongs to the DHBP synthase family. In the central section; belongs to the GTP cyclohydrolase II family. Mg(2+) is required as a cofactor. The cofactor is Mn(2+). Zn(2+) serves as cofactor.

The enzyme catalyses D-ribulose 5-phosphate = (2S)-2-hydroxy-3-oxobutyl phosphate + formate + H(+). It catalyses the reaction GTP + 4 H2O = 2,5-diamino-6-hydroxy-4-(5-phosphoribosylamino)-pyrimidine + formate + 2 phosphate + 3 H(+). It functions in the pathway cofactor biosynthesis; riboflavin biosynthesis; 2-hydroxy-3-oxobutyl phosphate from D-ribulose 5-phosphate: step 1/1. It participates in cofactor biosynthesis; riboflavin biosynthesis; 5-amino-6-(D-ribitylamino)uracil from GTP: step 1/4. Its function is as follows. Catalyzes the conversion of D-ribulose 5-phosphate to formate and 3,4-dihydroxy-2-butanone 4-phosphate. In terms of biological role, catalyzes the conversion of GTP to 2,5-diamino-6-ribosylamino-4(3H)-pyrimidinone 5'-phosphate (DARP), formate and pyrophosphate. The sequence is that of Riboflavin biosynthesis protein RibBA (ribBA) from Synechocystis sp. (strain ATCC 27184 / PCC 6803 / Kazusa).